The chain runs to 192 residues: MLGKKVVVTGVPGVGKTTVINGAMERLATEGVAYKAVNFGTFMFEVAKKENLASDRDEMRKLEKDVQKRLQQAAATGIAAMSGEANIIIDTHSTVKTPTGFLAGLPEWVLRELMPDIVVLVETDPDQILMRRLGDASRARDMEGYRAIAEHQEFNRAVSAAYAMYTGCTIKIVRNENFLLEQGIDDLVSVLR.

Residue 10-18 (GVPGVGKTT) participates in ATP binding.

The protein belongs to the archaeal adenylate kinase family.

It localises to the cytoplasm. It carries out the reaction AMP + ATP = 2 ADP. This chain is Adenylate kinase, found in Methanoculleus marisnigri (strain ATCC 35101 / DSM 1498 / JR1).